We begin with the raw amino-acid sequence, 101 residues long: Small ribosomal subunit protein bS18c (101 aa).

Basic residues predominate over residues 1-19; the sequence is MDKSKRPFRKSKRSFRRRL. Disordered regions lie at residues 1 to 23 and 82 to 101; these read MDKSKRPFRKSKRSFRRRLPPIG and KQFERTESTPRTAGPKTRNK.

This sequence belongs to the bacterial ribosomal protein bS18 family. As to quaternary structure, part of the 30S ribosomal subunit.

It localises to the plastid. It is found in the chloroplast. The sequence is that of Small ribosomal subunit protein bS18c from Drimys granadensis.